Here is a 285-residue protein sequence, read N- to C-terminus: Probable endonuclease 4 (285 aa).

Residues His68, His108, Glu145, Asp179, His182, His216, Asp229, His231, and Glu261 each coordinate Zn(2+).

It belongs to the AP endonuclease 2 family. Zn(2+) is required as a cofactor.

It catalyses the reaction Endonucleolytic cleavage to 5'-phosphooligonucleotide end-products.. In terms of biological role, endonuclease IV plays a role in DNA repair. It cleaves phosphodiester bonds at apurinic or apyrimidinic (AP) sites, generating a 3'-hydroxyl group and a 5'-terminal sugar phosphate. The protein is Probable endonuclease 4 of Geotalea daltonii (strain DSM 22248 / JCM 15807 / FRC-32) (Geobacter daltonii).